A 597-amino-acid chain; its full sequence is Miltiradiene synthase KSL2, chloroplastic (597 aa).

Residues 1–51 (MSLAFNLRAIPFSGHTIQSRRGLFPVHESPMITTKPFVAVKCSLTTSTDLM) constitute a chloroplast transit peptide. Residues aspartate 329, aspartate 333, asparagine 473, and glutamate 481 each coordinate Mg(2+). The DDXXD motif signature appears at 329–333 (DDFFD).

The protein belongs to the terpene synthase family. It depends on Mg(2+) as a cofactor.

It localises to the plastid. Its subcellular location is the chloroplast. It carries out the reaction (+)-copalyl diphosphate = miltiradiene + diphosphate. Its pathway is secondary metabolite biosynthesis; terpenoid biosynthesis. Functionally, involved in the biosynthesis of ent-kaurene diterpenoids natural products such as oridonin, miltiradiene, eriocalyxin B and nezukol, known to exhibit antitumor, anti-inflammatory and antibacterial activities. Catalyzes the conversion of (+)-copalyl diphosphate ((+)-CPP) to miltiradiene. The protein is Miltiradiene synthase KSL2, chloroplastic of Isodon japonicus (Scutellaria japonica).